The following is a 255-amino-acid chain: 5-oxoprolinase subunit A (255 aa).

The protein belongs to the LamB/PxpA family. Forms a complex composed of PxpA, PxpB and PxpC.

It carries out the reaction 5-oxo-L-proline + ATP + 2 H2O = L-glutamate + ADP + phosphate + H(+). Its function is as follows. Catalyzes the cleavage of 5-oxoproline to form L-glutamate coupled to the hydrolysis of ATP to ADP and inorganic phosphate. The sequence is that of 5-oxoprolinase subunit A from Corynebacterium efficiens (strain DSM 44549 / YS-314 / AJ 12310 / JCM 11189 / NBRC 100395).